A 30-amino-acid chain; its full sequence is U1-poneritoxin-Ni3b (30 aa).

This sequence belongs to the ponericin-G family. As to expression, expressed by the venom gland.

The protein localises to the secreted. Shows a broad spectrum of activity against both Gram-positive and Gram-negative bacteria. Also has antimicrobial activity against S.cerevisiae. Has insecticidal and non-hemolytic activity. This is U1-poneritoxin-Ni3b from Neoponera inversa (Ant).